The following is a 91-amino-acid chain: Sec-independent protein translocase protein TatA (91 aa).

The helical transmembrane segment at 3–23 (FFGIGLPEMLVILAIALLVFG) threads the bilayer. A disordered region spans residues 57–91 (DRTPATPAEATVEPPVLDSAPTEAVTVEKQTETQV). Residues 59 to 72 (TPATPAEATVEPPV) show a composition bias toward low complexity.

The protein belongs to the TatA/E family. Forms a complex with TatC.

It localises to the cell inner membrane. Functionally, part of the twin-arginine translocation (Tat) system that transports large folded proteins containing a characteristic twin-arginine motif in their signal peptide across membranes. TatA could form the protein-conducting channel of the Tat system. The polypeptide is Sec-independent protein translocase protein TatA (Synechococcus elongatus (strain ATCC 33912 / PCC 7942 / FACHB-805) (Anacystis nidulans R2)).